The primary structure comprises 471 residues: MENFKHLPEPFRIRVIEPVKRTTRAYREEAIIKSGMNPFLLDSEDVFIDLLTDSGTGAVTQSMQAAMMRGDEAYSGSRSYYALAESVKNIFGYQYTIPTHQGRGAEQIYIPVLIKKREQEKGLDRSKMVAFSNYFFDTTQGHSQINGCTVRNVYIKEAFDTGVRYDFKGNFDLEGLERGIEEVGPNNVPYIVATITSNSAGGQPVSLANLKAMYSIAKKYDIPVVMDSARFAENAYFIKQREAEYKDWTIEQITRETYKYADMLAMSAKKDAMVPMGGLLCVKDDSFFDVYTECRTLCVVQEGFPTYGGLEGGAMERLAVGLYDGMNLDWLAYRIAQVQYLVDGLEEIGVVCQQAGGHAAFVDAGKLLPHIPADQFPAQALACELYKVAGIRAVEIGSFLLGRDPKTGKQLPCPAELLRLTIPRATYTQTHMDFIIEAFKHVKENAANIKGLTFTYEPKVLRHFTAKLKEV.

N6-acetyllysine is present on residues Lys5, Lys115, and Lys156. N6-(pyridoxal phosphate)lysine is present on Lys270. Lys450 carries the N6-acetyllysine modification.

It belongs to the beta-eliminating lyase family. As to quaternary structure, homotetramer. Pyridoxal 5'-phosphate serves as cofactor.

It carries out the reaction L-tryptophan + H2O = indole + pyruvate + NH4(+). The protein operates within amino-acid degradation; L-tryptophan degradation via pyruvate pathway; indole and pyruvate from L-tryptophan: step 1/1. The polypeptide is Tryptophanase (Escherichia coli (strain SMS-3-5 / SECEC)).